A 142-amino-acid chain; its full sequence is MESMGNNSPGPEIRALARNIRMSAHKARRVINQIRGRSYGQALMILELMPYGACYPISQLIHSAAANANHNMGLNKANLLVGRVEVNEGAVFKRIQPRAQGRGYPIQKPTCHITIVSEEISRSNDPIMSIESRKKGYVWRRK.

The protein belongs to the universal ribosomal protein uL22 family. As to quaternary structure, part of the 50S ribosomal subunit.

The protein resides in the plastid. It localises to the chloroplast. This protein binds specifically to 23S rRNA. Functionally, the globular domain of the protein is located near the polypeptide exit tunnel on the outside of the subunit, while an extended beta-hairpin is found that lines the wall of the exit tunnel in the center of the 70S ribosome. This Pinus thunbergii (Japanese black pine) protein is Large ribosomal subunit protein uL22c (rpl22).